Consider the following 190-residue polypeptide: MSEDTALVVGLGNPGPQYEKTRHNVGFMVAGVLSARMGGKFSAHKKSGAEIVQGRLEGRPTILAKPRSFMNLSGSAVAGLARFFSVDPGNIVVIHDELDLDFGTIRLKQGGGEGGHNGLRSISQSLGTKDYLRTRVGIGRPPGRMDPASYVLKPFSSVERKELDLVCEESADAVELVLRLGLEAAQNRLH.

Tyr18 provides a ligand contact to tRNA. The Proton acceptor role is filled by His23. TRNA is bound by residues Phe69, Asn71, and Asn117.

The protein belongs to the PTH family. Monomer.

The protein localises to the cytoplasm. The enzyme catalyses an N-acyl-L-alpha-aminoacyl-tRNA + H2O = an N-acyl-L-amino acid + a tRNA + H(+). In terms of biological role, hydrolyzes ribosome-free peptidyl-tRNAs (with 1 or more amino acids incorporated), which drop off the ribosome during protein synthesis, or as a result of ribosome stalling. Functionally, catalyzes the release of premature peptidyl moieties from peptidyl-tRNA molecules trapped in stalled 50S ribosomal subunits, and thus maintains levels of free tRNAs and 50S ribosomes. The chain is Peptidyl-tRNA hydrolase from Rhodococcus opacus (strain B4).